We begin with the raw amino-acid sequence, 99 residues long: Ferredoxin (99 aa).

The 93-residue stretch at 4 to 96 (YKIHLLCEEE…DCTISTHVEQ (93 aa)) folds into the 2Fe-2S ferredoxin-type domain. [2Fe-2S] cluster-binding residues include Cys-42, Cys-47, Cys-50, and Cys-80.

The protein belongs to the 2Fe2S plant-type ferredoxin family. As to quaternary structure, forms a complex with heterodimeric ferredoxin-thioredoxin reductase (FTR) and thioredoxin. [2Fe-2S] cluster is required as a cofactor.

The protein localises to the plastid. It localises to the chloroplast. In terms of biological role, ferredoxins are iron-sulfur proteins that transfer electrons in a wide variety of metabolic reactions. The protein is Ferredoxin (petF) of Pyropia yezoensis (Susabi-nori).